A 729-amino-acid chain; its full sequence is Catalase-peroxidase (729 aa).

The tract at residues 1–33 is disordered; sequence MSAHNTNESAVGKCPFHEQKEEKSVLARGAGGG. The segment covering 15-25 has biased composition (basic and acidic residues); that stretch reads PFHEQKEEKSV. The segment at residues 108–229 is a cross-link (tryptophyl-tyrosyl-methioninium (Trp-Tyr) (with M-255)); sequence WHSAGTYRTV…LGATEMGLIY (122 aa). The active-site Proton acceptor is the His-109. A cross-link (tryptophyl-tyrosyl-methioninium (Tyr-Met) (with W-108)) is located at residues 229–255; sequence YVNPEGPEASGNPASAAPAIRATFGNM. Residue His-270 coordinates heme b.

It belongs to the peroxidase family. Peroxidase/catalase subfamily. In terms of assembly, homodimer or homotetramer. The cofactor is heme b. Formation of the three residue Trp-Tyr-Met cross-link is important for the catalase, but not the peroxidase activity of the enzyme.

The catalysed reaction is H2O2 + AH2 = A + 2 H2O. It carries out the reaction 2 H2O2 = O2 + 2 H2O. Bifunctional enzyme with both catalase and broad-spectrum peroxidase activity. The chain is Catalase-peroxidase from Erwinia tasmaniensis (strain DSM 17950 / CFBP 7177 / CIP 109463 / NCPPB 4357 / Et1/99).